We begin with the raw amino-acid sequence, 402 residues long: Formate-dependent phosphoribosylglycinamide formyltransferase (402 aa).

Residues 22 to 23 (EL) and E82 contribute to the N(1)-(5-phospho-beta-D-ribosyl)glycinamide site. ATP-binding positions include R115, K160, 165 to 170 (SSGKGQ), 200 to 203 (EGFV), and E208. The region spanning 120–318 (RLAAETLGLP…EFELHARAIL (199 aa)) is the ATP-grasp domain. Residues E277 and E289 each contribute to the Mg(2+) site. Residues D296, K365, and 372–373 (RR) contribute to the N(1)-(5-phospho-beta-D-ribosyl)glycinamide site.

Belongs to the PurK/PurT family. Homodimer.

The enzyme catalyses N(1)-(5-phospho-beta-D-ribosyl)glycinamide + formate + ATP = N(2)-formyl-N(1)-(5-phospho-beta-D-ribosyl)glycinamide + ADP + phosphate + H(+). It participates in purine metabolism; IMP biosynthesis via de novo pathway; N(2)-formyl-N(1)-(5-phospho-D-ribosyl)glycinamide from N(1)-(5-phospho-D-ribosyl)glycinamide (formate route): step 1/1. Functionally, involved in the de novo purine biosynthesis. Catalyzes the transfer of formate to 5-phospho-ribosyl-glycinamide (GAR), producing 5-phospho-ribosyl-N-formylglycinamide (FGAR). Formate is provided by PurU via hydrolysis of 10-formyl-tetrahydrofolate. The polypeptide is Formate-dependent phosphoribosylglycinamide formyltransferase (Mycobacteroides abscessus (strain ATCC 19977 / DSM 44196 / CCUG 20993 / CIP 104536 / JCM 13569 / NCTC 13031 / TMC 1543 / L948) (Mycobacterium abscessus)).